Consider the following 78-residue polypeptide: Small ribosomal subunit protein bS18 (78 aa).

It belongs to the bacterial ribosomal protein bS18 family. Part of the 30S ribosomal subunit. Forms a tight heterodimer with protein bS6.

In terms of biological role, binds as a heterodimer with protein bS6 to the central domain of the 16S rRNA, where it helps stabilize the platform of the 30S subunit. This is Small ribosomal subunit protein bS18 from Clostridium novyi (strain NT).